We begin with the raw amino-acid sequence, 132 residues long: Small ribosomal subunit protein uS8c (132 aa).

It belongs to the universal ribosomal protein uS8 family. Part of the 30S ribosomal subunit.

It is found in the plastid. It localises to the chloroplast. Functionally, one of the primary rRNA binding proteins, it binds directly to 16S rRNA central domain where it helps coordinate assembly of the platform of the 30S subunit. This chain is Small ribosomal subunit protein uS8c (rps8), found in Liriodendron tulipifera (Tuliptree).